Reading from the N-terminus, the 478-residue chain is Putative indole-3-acetic acid-amido synthetase GH3.10 (478 aa).

Belongs to the IAA-amido conjugating enzyme family.

May catalyze the synthesis of indole-3-acetic acid (IAA)-amino acid conjugates, providing a mechanism for the plant to cope with the presence of excess auxin. This is Putative indole-3-acetic acid-amido synthetase GH3.10 (GH3.10) from Oryza sativa subsp. japonica (Rice).